Reading from the N-terminus, the 372-residue chain is 4-hydroxy-3-methylbut-2-en-1-yl diphosphate synthase (flavodoxin) (372 aa).

[4Fe-4S] cluster contacts are provided by C270, C273, C305, and E312.

Belongs to the IspG family. [4Fe-4S] cluster serves as cofactor.

It catalyses the reaction (2E)-4-hydroxy-3-methylbut-2-enyl diphosphate + oxidized [flavodoxin] + H2O + 2 H(+) = 2-C-methyl-D-erythritol 2,4-cyclic diphosphate + reduced [flavodoxin]. It functions in the pathway isoprenoid biosynthesis; isopentenyl diphosphate biosynthesis via DXP pathway; isopentenyl diphosphate from 1-deoxy-D-xylulose 5-phosphate: step 5/6. In terms of biological role, converts 2C-methyl-D-erythritol 2,4-cyclodiphosphate (ME-2,4cPP) into 1-hydroxy-2-methyl-2-(E)-butenyl 4-diphosphate. This is 4-hydroxy-3-methylbut-2-en-1-yl diphosphate synthase (flavodoxin) from Escherichia coli (strain SMS-3-5 / SECEC).